The sequence spans 92 residues: Small nuclear ribonucleoprotein E (92 aa).

The region spanning 18–92 is the Sm domain; the sequence is INLIFRYLQN…NITLLQSVSN (75 aa).

It belongs to the snRNP Sm proteins family. Core component of the spliceosomal U1, U2, U4 and U5 small nuclear ribonucleoproteins (snRNPs), the building blocks of the spliceosome. Most spliceosomal snRNPs contain a common set of Sm proteins, snrpb, snrpd1, snrpd2, snrpd3, snrpe, snrpf and snrpg that assemble in a heptameric protein ring on the Sm site of the small nuclear RNA to form the core snRNP. Component of the U1 snRNP. The U1 snRNP is composed of the U1 snRNA and the 7 core Sm proteins snrpb, snrpd1, snrpd2, snrpd3, snrpe, snrpf and snrpg, and at least three U1 snRNP-specific proteins snrnp70/u1-70k, snrpa/u1-a and snrpc/u1-c. Component of the U4/U6-U5 tri-snRNP complex composed of the U4, U6 and U5 snRNAs and at least prpf3, prpf4, prpf6, prpf8, prpf31, snrnp200, txnl4a, snrnp40, snrpb, snrpd1, snrpd2, snrpd3, snrpe, snrpf, snrpg, ddx23, cd2bp2, ppih, snu13, eftud2, sart1 and usp39, plus lsm2, lsm3, lsm4, lsm5, lsm6, lsm7 and lsm8. Component of the U7 snRNP complex, or U7 Sm protein core complex, that is composed of the U7 snRNA and at least lsm10, lsm11, snrpb, snrpd3, snrpe, snrpf and snrpg; the complex does not contain snrpd1 and snrpd2. Component of the minor spliceosome, which splices U12-type introns. Part of the SMN-Sm complex that contains smn1, gemin2/sip1, ddx20/gemin3, gemin4, gemin5, gemin6, gemin7, gemin8, strap/unrip and the Sm proteins snrpb, snrpd1, snrpd2, snrpd3, snrpe, snrpf and snrpg; catalyzes core snRNPs assembly. Forms a 6S pICln-Sm complex composed of clns1a/pICln, snrpd1, snrpd2, snrpe, snrpf and snrpg; ring-like structure where clns1a/pICln mimics additional Sm proteins and which is unable to assemble into the core snRNP.

It localises to the cytoplasm. The protein localises to the cytosol. The protein resides in the nucleus. In terms of biological role, plays a role in pre-mRNA splicing as a core component of the spliceosomal U1, U2, U4 and U5 small nuclear ribonucleoproteins (snRNPs), the building blocks of the spliceosome. Component of both the pre-catalytic spliceosome B complex and activated spliceosome C complexes. As a component of the minor spliceosome, involved in the splicing of U12-type introns in pre-mRNAs. As part of the U7 snRNP it is involved in histone 3'-end processing. The chain is Small nuclear ribonucleoprotein E (snrpe) from Danio rerio (Zebrafish).